Reading from the N-terminus, the 456-residue chain is Methylenetetrahydrofolate--tRNA-(uracil-5-)-methyltransferase TrmFO (456 aa).

7-12 (GAGLAG) is an FAD binding site.

It belongs to the MnmG family. TrmFO subfamily. FAD serves as cofactor.

Its subcellular location is the cytoplasm. The catalysed reaction is uridine(54) in tRNA + (6R)-5,10-methylene-5,6,7,8-tetrahydrofolate + NADH + H(+) = 5-methyluridine(54) in tRNA + (6S)-5,6,7,8-tetrahydrofolate + NAD(+). The enzyme catalyses uridine(54) in tRNA + (6R)-5,10-methylene-5,6,7,8-tetrahydrofolate + NADPH + H(+) = 5-methyluridine(54) in tRNA + (6S)-5,6,7,8-tetrahydrofolate + NADP(+). Its function is as follows. Catalyzes the folate-dependent formation of 5-methyl-uridine at position 54 (M-5-U54) in all tRNAs. The protein is Methylenetetrahydrofolate--tRNA-(uracil-5-)-methyltransferase TrmFO of Synechococcus sp. (strain RCC307).